Here is a 287-residue protein sequence, read N- to C-terminus: ATP synthase gamma chain (287 aa).

The protein belongs to the ATPase gamma chain family. F-type ATPases have 2 components, CF(1) - the catalytic core - and CF(0) - the membrane proton channel. CF(1) has five subunits: alpha(3), beta(3), gamma(1), delta(1), epsilon(1). CF(0) has three main subunits: a, b and c.

It is found in the cell inner membrane. Produces ATP from ADP in the presence of a proton gradient across the membrane. The gamma chain is believed to be important in regulating ATPase activity and the flow of protons through the CF(0) complex. The chain is ATP synthase gamma chain from Xanthomonas campestris pv. campestris (strain B100).